A 288-amino-acid chain; its full sequence is Shikimate kinase (288 aa).

Position 81–91 (81–91) interacts with ATP; sequence PVASGLKSSSA.

The protein belongs to the GHMP kinase family. Archaeal shikimate kinase subfamily.

It localises to the cytoplasm. It catalyses the reaction shikimate + ATP = 3-phosphoshikimate + ADP + H(+). It participates in metabolic intermediate biosynthesis; chorismate biosynthesis; chorismate from D-erythrose 4-phosphate and phosphoenolpyruvate: step 5/7. The protein is Shikimate kinase of Methanothrix thermoacetophila (strain DSM 6194 / JCM 14653 / NBRC 101360 / PT) (Methanosaeta thermophila).